A 255-amino-acid polypeptide reads, in one-letter code: Putative F-box protein L126 (255 aa).

Positions 1 to 46 constitute an F-box domain; it reads MLPEEILFMVFSFLDVKELIACSHACSHACSQWRRICSDKLLWVQK.

The chain is Putative F-box protein L126 from Acanthamoeba polyphaga (Amoeba).